The primary structure comprises 455 residues: Bifunctional protein GlmU (455 aa).

Residues Met1–Arg229 are pyrophosphorylase. UDP-N-acetyl-alpha-D-glucosamine-binding positions include Leu11 to Gly14, Lys25, Gln76, Gly81 to Thr82, Tyr103 to Asp105, Gly140, Glu154, Asn169, and Asn227. Asp105 provides a ligand contact to Mg(2+). Mg(2+) is bound at residue Asn227. A linker region spans residues Leu230–Ala250. Residues Gly251–Lys455 form an N-acetyltransferase region. 2 residues coordinate UDP-N-acetyl-alpha-D-glucosamine: Arg333 and Lys351. The active-site Proton acceptor is the His363. UDP-N-acetyl-alpha-D-glucosamine contacts are provided by Tyr366 and Asn377. Acetyl-CoA is bound by residues Ala380, Asn386–Tyr387, Ser405, Ala423, and Arg440.

The protein in the N-terminal section; belongs to the N-acetylglucosamine-1-phosphate uridyltransferase family. This sequence in the C-terminal section; belongs to the transferase hexapeptide repeat family. In terms of assembly, homotrimer. Mg(2+) serves as cofactor.

It is found in the cytoplasm. The catalysed reaction is alpha-D-glucosamine 1-phosphate + acetyl-CoA = N-acetyl-alpha-D-glucosamine 1-phosphate + CoA + H(+). The enzyme catalyses N-acetyl-alpha-D-glucosamine 1-phosphate + UTP + H(+) = UDP-N-acetyl-alpha-D-glucosamine + diphosphate. It functions in the pathway nucleotide-sugar biosynthesis; UDP-N-acetyl-alpha-D-glucosamine biosynthesis; N-acetyl-alpha-D-glucosamine 1-phosphate from alpha-D-glucosamine 6-phosphate (route II): step 2/2. The protein operates within nucleotide-sugar biosynthesis; UDP-N-acetyl-alpha-D-glucosamine biosynthesis; UDP-N-acetyl-alpha-D-glucosamine from N-acetyl-alpha-D-glucosamine 1-phosphate: step 1/1. It participates in bacterial outer membrane biogenesis; LPS lipid A biosynthesis. Catalyzes the last two sequential reactions in the de novo biosynthetic pathway for UDP-N-acetylglucosamine (UDP-GlcNAc). The C-terminal domain catalyzes the transfer of acetyl group from acetyl coenzyme A to glucosamine-1-phosphate (GlcN-1-P) to produce N-acetylglucosamine-1-phosphate (GlcNAc-1-P), which is converted into UDP-GlcNAc by the transfer of uridine 5-monophosphate (from uridine 5-triphosphate), a reaction catalyzed by the N-terminal domain. In Salmonella arizonae (strain ATCC BAA-731 / CDC346-86 / RSK2980), this protein is Bifunctional protein GlmU.